The chain runs to 377 residues: Succinyl-diaminopimelate desuccinylase (377 aa).

Position 68 (H68) interacts with Zn(2+). Residue D70 is part of the active site. D101 is a Zn(2+) binding site. E135 functions as the Proton acceptor in the catalytic mechanism. Positions 136, 164, and 350 each coordinate Zn(2+).

It belongs to the peptidase M20A family. DapE subfamily. In terms of assembly, homodimer. Zn(2+) serves as cofactor. Co(2+) is required as a cofactor.

It carries out the reaction N-succinyl-(2S,6S)-2,6-diaminopimelate + H2O = (2S,6S)-2,6-diaminopimelate + succinate. It participates in amino-acid biosynthesis; L-lysine biosynthesis via DAP pathway; LL-2,6-diaminopimelate from (S)-tetrahydrodipicolinate (succinylase route): step 3/3. In terms of biological role, catalyzes the hydrolysis of N-succinyl-L,L-diaminopimelic acid (SDAP), forming succinate and LL-2,6-diaminopimelate (DAP), an intermediate involved in the bacterial biosynthesis of lysine and meso-diaminopimelic acid, an essential component of bacterial cell walls. This Psychromonas ingrahamii (strain DSM 17664 / CCUG 51855 / 37) protein is Succinyl-diaminopimelate desuccinylase.